The chain runs to 692 residues: Aspartate--tRNA ligase, mitochondrial (692 aa).

The transit peptide at 1-61 directs the protein to the mitochondrion; sequence MNRVILKDSK…RNFTNTINNN (61 aa). Glu264 contacts L-aspartate. Positions 287-290 are aspartate; that stretch reads QQYK. Arg309 contributes to the L-aspartate binding site. ATP is bound by residues 309 to 311 and Glu590; that span reads RDE. Arg597 serves as a coordination point for L-aspartate. 642–645 is a binding site for ATP; the sequence is GFDR.

Belongs to the class-II aminoacyl-tRNA synthetase family. Type 1 subfamily.

The protein resides in the mitochondrion matrix. The catalysed reaction is tRNA(Asp) + L-aspartate + ATP = L-aspartyl-tRNA(Asp) + AMP + diphosphate. In Dictyostelium discoideum (Social amoeba), this protein is Aspartate--tRNA ligase, mitochondrial (maspS).